The chain runs to 464 residues: Argininosuccinate lyase (464 aa).

Belongs to the lyase 1 family. Argininosuccinate lyase subfamily.

It localises to the cytoplasm. The catalysed reaction is 2-(N(omega)-L-arginino)succinate = fumarate + L-arginine. Its pathway is amino-acid biosynthesis; L-arginine biosynthesis; L-arginine from L-ornithine and carbamoyl phosphate: step 3/3. This Streptococcus suis (strain 98HAH33) protein is Argininosuccinate lyase.